The sequence spans 431 residues: Adenylosuccinate synthetase (431 aa).

GTP contacts are provided by residues 12–18 (GDEGKGK) and 40–42 (GHT). Asp13 acts as the Proton acceptor in catalysis. The Mg(2+) site is built by Asp13 and Gly40. Residues 13–16 (DEGK), 38–41 (NAGH), Thr130, Arg144, Gln225, Thr240, and Arg304 contribute to the IMP site. The active-site Proton donor is His41. 300–306 (ATTGRPR) contacts substrate. GTP contacts are provided by residues Arg306, 332–334 (KLD), and 414–416 (SVG).

This sequence belongs to the adenylosuccinate synthetase family. In terms of assembly, homodimer. It depends on Mg(2+) as a cofactor.

Its subcellular location is the cytoplasm. The catalysed reaction is IMP + L-aspartate + GTP = N(6)-(1,2-dicarboxyethyl)-AMP + GDP + phosphate + 2 H(+). Its pathway is purine metabolism; AMP biosynthesis via de novo pathway; AMP from IMP: step 1/2. Plays an important role in the de novo pathway of purine nucleotide biosynthesis. Catalyzes the first committed step in the biosynthesis of AMP from IMP. The polypeptide is Adenylosuccinate synthetase (Geotalea daltonii (strain DSM 22248 / JCM 15807 / FRC-32) (Geobacter daltonii)).